A 385-amino-acid chain; its full sequence is Glucans biosynthesis protein C (385 aa).

10 helical membrane passes run 17–37, 60–80, 91–111, 137–157, 173–193, 212–232, 239–259, 274–294, 311–331, and 338–358; these read AWLM…SHTW, MQVF…RYPL, VGIP…IMLQ, ISHL…VWIF, KFSM…YAVI, FIVM…LAFI, LFTT…VAYL, TESV…FSFG, ASLF…AYIT, and WLGF…LYEI.

It belongs to the acyltransferase 3 family. OpgC subfamily.

It localises to the cell membrane. The protein operates within glycan metabolism; osmoregulated periplasmic glucan (OPG) biosynthesis. Its function is as follows. Necessary for the succinyl substitution of periplasmic glucans. Could catalyze the transfer of succinyl residues from the cytoplasmic side of the membrane to the nascent glucan backbones on the periplasmic side of the membrane. This is Glucans biosynthesis protein C from Escherichia coli O17:K52:H18 (strain UMN026 / ExPEC).